Here is a 210-residue protein sequence, read N- to C-terminus: Probable GTP-binding protein EngB (210 aa).

One can recognise an EngB-type G domain in the interval Asn29–Pro203. GTP is bound by residues Gly37 to Ser44, Gly64 to Leu68, Asp82 to Gly85, Thr149 to Asp152, and Ile181 to Ala184. Ser44 and Thr66 together coordinate Mg(2+).

Belongs to the TRAFAC class TrmE-Era-EngA-EngB-Septin-like GTPase superfamily. EngB GTPase family. Mg(2+) serves as cofactor.

Its function is as follows. Necessary for normal cell division and for the maintenance of normal septation. This Haemophilus ducreyi (strain 35000HP / ATCC 700724) protein is Probable GTP-binding protein EngB.